The following is a 345-amino-acid chain: Skn-1 dependent zygotic transcript 15 protein (345 aa).

The 45-residue stretch at Ala-11–Val-55 folds into the F-box domain.

In terms of biological role, may have a role in embryogenesis. This chain is Skn-1 dependent zygotic transcript 15 protein (sdz-15), found in Caenorhabditis elegans.